A 398-amino-acid chain; its full sequence is MIIHSLLDTDLYKFTMMQAVLHQHPAAQVDYRFKCRTPGVDLAQFIDEISREIDALCRLRLREDEVDYLRSLRFIKPDFADFLALFHLDRKYLTLAASAAHPGEIELTIRGPWLHTILFEVPLLAIINEVWFRNTSEPDFEEGRSRLREKVRSLRSMPAGCKIADYGTRRRYSRQWHGELLPLLRDGLGEQFVGTSNVFFAKQYGLTPLGTMAHEYLQAFQALGPRLRDSQVAALDSWAREYRGDLGIALSDVVGLDAFLRDFDLYFCKLFDGMRHDSGDPFEWGERVIAHLEAHRVDPRTKVLVFSDGLNIDKVMRLYEHFSPRCRLAFGVGTSLTNDLGPTPLQIVIKMVRCNGQPVAKLSDSPGKSMCEDLGYLRYLRDVFGLPPMPEAGDPARQ.

Histidine 214 is modified (phosphohistidine; by autocatalysis).

It belongs to the NAPRTase family. Transiently phosphorylated on a His residue during the reaction cycle. Phosphorylation strongly increases the affinity for substrates and increases the rate of nicotinate D-ribonucleotide production. Dephosphorylation regenerates the low-affinity form of the enzyme, leading to product release.

It catalyses the reaction nicotinate + 5-phospho-alpha-D-ribose 1-diphosphate + ATP + H2O = nicotinate beta-D-ribonucleotide + ADP + phosphate + diphosphate. The protein operates within cofactor biosynthesis; NAD(+) biosynthesis; nicotinate D-ribonucleotide from nicotinate: step 1/1. Catalyzes the synthesis of beta-nicotinate D-ribonucleotide from nicotinate and 5-phospho-D-ribose 1-phosphate at the expense of ATP. In Xanthomonas campestris pv. campestris (strain B100), this protein is Nicotinate phosphoribosyltransferase.